Reading from the N-terminus, the 3391-residue chain is Genome polyprotein (3391 aa).

The interaction with host EXOC1 stretch occupies residues 1 to 15; that stretch reads MNNQRKKARSTPFNM. Residues 1–101 lie on the Cytoplasmic side of the membrane; sequence MNNQRKKARS…LNILNRRRRT (101 aa). The hydrophobic; homodimerization of capsid protein C stretch occupies residues 37-72; sequence MLQGRGPLKLFMALVAFLRFLTIPPTAGILKRWGTI. A propeptide spans 101–114 (ER anchor for the capsid protein C, removed in mature form by serine protease NS3); sequence TAGVIIMLIPTAMA. Residues 102–119 form a helical membrane-spanning segment; the sequence is AGVIIMLIPTAMAFHLTT. The Extracellular portion of the chain corresponds to 120-241; it reads RNGEPHMIVG…KHVQRIETWI (122 aa). Asparagine 183 carries N-linked (GlcNAc...) asparagine; by host glycosylation. The chain crosses the membrane as a helical span at residues 242 to 259; sequence LRHPGFTIMAAILAYTIG. Residues 260–265 lie on the Cytoplasmic side of the membrane; sequence TTHFQR. The chain crosses the membrane as a helical span at residues 266–280; the sequence is ALIFILLTAVAPSMT. Residues 281–725 are Extracellular-facing; sequence MRCIGISNRD…LHQVFGAIYG (445 aa). 4 disulfides stabilise this stretch: cysteine 283–cysteine 310, cysteine 340–cysteine 401, cysteine 354–cysteine 385, and cysteine 372–cysteine 396. Asparagine 347 is a glycosylation site (N-linked (GlcNAc...) asparagine; by host). Positions 378 to 391 are fusion peptide; the sequence is DRGWGNGCGLFGKG. Asparagine 433 carries N-linked (GlcNAc...) asparagine; by host glycosylation. Disulfide bonds link cysteine 465–cysteine 565 and cysteine 582–cysteine 613. A helical membrane pass occupies residues 726-746; it reads AAFSGVSWTMKILIGVIITWI. At 747–752 the chain is on the cytoplasmic side; sequence GMNSRS. The chain crosses the membrane as a helical span at residues 753–773; that stretch reads TSLSVSLVLVGVVTLYLGAMV. Topologically, residues 774–1195 are extracellular; sequence QADSGCVVSW…MVGATMTDDI (422 aa). Intrachain disulfides connect cysteine 779/cysteine 790, cysteine 830/cysteine 918, cysteine 954/cysteine 998, cysteine 1055/cysteine 1104, cysteine 1066/cysteine 1088, and cysteine 1087/cysteine 1091. N-linked (GlcNAc...) asparagine; by host glycosylation is found at asparagine 905 and asparagine 982. The N-linked (GlcNAc...) asparagine; by host glycan is linked to asparagine 1134. Residues 1196–1220 form a helical membrane-spanning segment; the sequence is GMGVTYLALLAAFKVRPTFAAGLLL. The Cytoplasmic portion of the chain corresponds to 1221-1226; it reads RKLTSK. Residues 1227–1245 form a helical membrane-spanning segment; the sequence is ELMMATIGIALLSQSTIPE. Residues 1246-1269 lie on the Lumenal side of the membrane; sequence TILELTDALALGMMVLKIVRNMEK. The chain crosses the membrane as a helical span at residues 1270 to 1290; that stretch reads YQLAVTIMAILCVPNAVILQN. A topological domain (cytoplasmic) is located at residue alanine 1291. A helical membrane pass occupies residues 1292–1310; sequence WKVSCTILAAVSVSPLLLT. Residues 1311 to 1317 are Lumenal-facing; that stretch reads SSQQKAD. Residues 1318 to 1338 form a helical membrane-spanning segment; that stretch reads WIPLALTIKGLNPTAIFLTTL. Residues 1339 to 1346 lie on the Cytoplasmic side of the membrane; that stretch reads SRTSKKRS. The chain crosses the membrane as a helical span at residues 1347-1367; sequence WPLNEAIMAVGMVSILASSLL. Residues 1368-1370 are Lumenal-facing; the sequence is KND. A helical transmembrane segment spans residues 1371-1391; the sequence is IPMTGPLVAGGLLTVCYVLTG. The Cytoplasmic segment spans residues 1392–1447; it reads RSADLELERAADVKWEDQAEISGSSPILSITISEDGSMSIKNEEEEQTLTILIRTG. The segment at 1398–1437 is interacts with and activates NS3 protease; that stretch reads LERAADVKWEDQAEISGSSPILSITISEDGSMSIKNEEEE. The helical intramembrane region spans 1448 to 1468; that stretch reads LLVISGVFPVSIPITAAAWYL. Residues 1469–2147 are Cytoplasmic-facing; sequence WEVKKQRAGV…LSELPETLET (679 aa). One can recognise a Peptidase S7 domain in the interval 1476–1653; it reads AGVLWDVPSP…EKSIEDNPEI (178 aa). Active-site charge relay system; for serine protease NS3 activity residues include histidine 1526, aspartate 1550, and serine 1610. The 157-residue stretch at 1655-1811 folds into the Helicase ATP-binding domain; the sequence is DDIFRKKRLT…QSNAPIMDEE (157 aa). The important for RNA-binding stretch occupies residues 1659–1662; that stretch reads RKKR. 1668 to 1675 is an ATP binding site; sequence LHPGAGKT. Positions 1759–1762 match the DEAH box motif; the sequence is DEAH. The 168-residue stretch at 1821–1988 folds into the Helicase C-terminal domain; sequence SGHEWVTDFK…IIPSMFEPER (168 aa). Lysine 1863 is subject to N6-acetyllysine; by host. The helical transmembrane segment at 2148–2168 threads the bilayer; sequence LLLLTLLATVTGGIFLFLMSG. Residues 2169–2170 are Lumenal-facing; the sequence is KG. The segment at residues 2171–2191 is an intramembrane region (helical); that stretch reads IGKMTLGMCCIITASILLWYA. Position 2192 (glutamine 2192) is a topological domain, lumenal. The chain crosses the membrane as a helical span at residues 2193–2213; the sequence is IQPHWIAASIILEFFLIVLLI. Residues 2214–2228 lie on the Cytoplasmic side of the membrane; sequence PEPEKQRTPQDNQLT. Residues 2229–2249 form a helical membrane-spanning segment; that stretch reads YVVIAILTVVAATMANEMGFL. At 2250–2274 the chain is on the lumenal side; sequence EKTKKDLGLGSITTQESESNILDID. The segment at residues 2275 to 2295 is an intramembrane region (helical); that stretch reads LRPASAWTLYAVATTFVTPML. The Lumenal segment spans residues 2296 to 2316; that stretch reads RHSIENSSVNVSLTAIANQAT. N-linked (GlcNAc...) asparagine; by host glycosylation is found at asparagine 2301 and asparagine 2305. The segment at residues 2317–2337 is an intramembrane region (helical); sequence VLMGLGKGWPLSKIHIGVPLL. Residues 2338 to 2347 are Lumenal-facing; the sequence is AIGCYSQVNP. A helical transmembrane segment spans residues 2348 to 2368; the sequence is ITLTAALLLLVAHYAIIGPGL. Residues 2369–2413 lie on the Cytoplasmic side of the membrane; that stretch reads QAKATREAQKRAAAGIMKNPTVDGITVIDLDPIPYDPKFEKQLGQ. The helical transmembrane segment at 2414–2434 threads the bilayer; the sequence is VMLLILCVTQVLMMRTTWALC. Residues 2435 to 2459 are Lumenal-facing; that stretch reads EALTLATGPISTLWEGNPGRFWNTT. N-linked (GlcNAc...) asparagine; by host glycosylation occurs at asparagine 2457. A helical membrane pass occupies residues 2460–2480; that stretch reads IAVSMANIFRGSYLAGAGLLF. Over 2481-3391 the chain is Cytoplasmic; sequence SIMKNTTNTR…REEEEAGVLW (911 aa). Residues 2493–2755 enclose the mRNA cap 0-1 NS5-type MT domain; that stretch reads TGNIGETLGE…DVDLGSGTRN (263 aa). S-adenosyl-L-methionine is bound at residue serine 2547. The residue at position 2547 (serine 2547) is a Phosphoserine. The active-site For 2'-O-MTase activity is lysine 2552. An SUMO-interacting motif motif is present at residues 2568-2571; that stretch reads VVDL. Residues glycine 2577, tryptophan 2578, threonine 2595, lysine 2596, aspartate 2622, and valine 2623 each coordinate S-adenosyl-L-methionine. The active-site For 2'-O-MTase activity is the aspartate 2637. An S-adenosyl-L-methionine-binding site is contributed by isoleucine 2638. Active-site for 2'-O-MTase activity residues include lysine 2672 and glutamate 2708. Tyrosine 2710 is an S-adenosyl-L-methionine binding site. Glutamate 2929, histidine 2933, cysteine 2938, and cysteine 2941 together coordinate Zn(2+). One can recognise a RdRp catalytic domain in the interval 3020-3169; the sequence is AMYADDTAGW…PLDDRFASAL (150 aa). Positions 3203, 3219, and 3338 each coordinate Zn(2+).

This sequence in the N-terminal section; belongs to the class I-like SAM-binding methyltransferase superfamily. mRNA cap 0-1 NS5-type methyltransferase family. Homodimer. Interacts (via N-terminus) with host EXOC1 (via C-terminus); this interaction results in EXOC1 degradation through the proteasome degradation pathway. In terms of assembly, forms heterodimers with envelope protein E in the endoplasmic reticulum and Golgi. As to quaternary structure, homodimer; in the endoplasmic reticulum and Golgi. Interacts with protein prM. Interacts with non-structural protein 1. Homodimer; Homohexamer when secreted. Interacts with envelope protein E. Interacts with host PRKAA1. In terms of assembly, interacts (via N-terminus) with serine protease NS3. As to quaternary structure, forms a heterodimer with serine protease NS3. May form homooligomers. Forms a heterodimer with NS2B. Interacts with NS4B. Interacts with unphosphorylated RNA-directed RNA polymerase NS5; this interaction stimulates RNA-directed RNA polymerase NS5 guanylyltransferase activity. Interacts with host SHFL. In terms of assembly, interacts with host MAVS; this interaction inhibits the synthesis of IFN-beta. Interacts with host SHFL. Interacts with host AUP1; the interaction occurs in the presence of Dengue virus NS4B and induces lipophagy which facilitates production of virus progeny particles. May interact with host SRPRA and SEC61G. As to quaternary structure, interacts with serine protease NS3. Homodimer. Interacts with host STAT2; this interaction inhibits the phosphorylation of the latter, and, when all viral proteins are present (polyprotein), targets STAT2 for degradation. Interacts with serine protease NS3. Interacts with host PAF1 complex; the interaction may prevent the recruitment of the PAF1 complex to interferon-responsive genes, and thus reduces the immune response. Post-translationally, specific enzymatic cleavages in vivo yield mature proteins. Cleavages in the lumen of endoplasmic reticulum are performed by host signal peptidase, whereas cleavages in the cytoplasmic side are performed by serine protease NS3. Signal cleavage at the 2K-4B site requires a prior NS3 protease-mediated cleavage at the 4A-2K site. Cleaved in post-Golgi vesicles by a host furin, releasing the mature small envelope protein M, and peptide pr. This cleavage is incomplete as up to 30% of viral particles still carry uncleaved prM. In terms of processing, N-glycosylated. Post-translationally, N-glycosylated. The excreted form is glycosylated and this is required for efficient secretion of the protein from infected cells. Acetylated by host KAT5. Acetylation modulates NS3 RNA-binding and unwinding activities and plays an important positive role for viral replication. In terms of processing, sumoylation of RNA-directed RNA polymerase NS5 increases NS5 protein stability allowing proper viral RNA replication. Post-translationally, phosphorylated on serines residues. This phosphorylation may trigger NS5 nuclear localization.

Its subcellular location is the virion. The protein localises to the host nucleus. It localises to the host cytoplasm. The protein resides in the host perinuclear region. It is found in the secreted. Its subcellular location is the virion membrane. The protein localises to the host endoplasmic reticulum membrane. It localises to the host mitochondrion. It carries out the reaction Selective hydrolysis of -Xaa-Xaa-|-Yaa- bonds in which each of the Xaa can be either Arg or Lys and Yaa can be either Ser or Ala.. The catalysed reaction is RNA(n) + a ribonucleoside 5'-triphosphate = RNA(n+1) + diphosphate. The enzyme catalyses a ribonucleoside 5'-triphosphate + H2O = a ribonucleoside 5'-diphosphate + phosphate + H(+). It catalyses the reaction ATP + H2O = ADP + phosphate + H(+). It carries out the reaction a 5'-end (5'-triphosphoguanosine)-ribonucleoside in mRNA + S-adenosyl-L-methionine = a 5'-end (N(7)-methyl 5'-triphosphoguanosine)-ribonucleoside in mRNA + S-adenosyl-L-homocysteine. The catalysed reaction is a 5'-end (N(7)-methyl 5'-triphosphoguanosine)-ribonucleoside in mRNA + S-adenosyl-L-methionine = a 5'-end (N(7)-methyl 5'-triphosphoguanosine)-(2'-O-methyl-ribonucleoside) in mRNA + S-adenosyl-L-homocysteine + H(+). In terms of biological role, plays a role in virus budding by binding to the cell membrane and gathering the viral RNA into a nucleocapsid that forms the core of a mature virus particle. During virus entry, may induce genome penetration into the host cytoplasm after hemifusion induced by the surface proteins. Can migrate to the cell nucleus where it modulates host functions. Overcomes the anti-viral effects of host EXOC1 by sequestering and degrading the latter through the proteasome degradation pathway. Functionally, inhibits RNA silencing by interfering with host Dicer. Its function is as follows. Prevents premature fusion activity of envelope proteins in trans-Golgi by binding to envelope protein E at pH6.0. After virion release in extracellular space, gets dissociated from E dimers. Acts as a chaperone for envelope protein E during intracellular virion assembly by masking and inactivating envelope protein E fusion peptide. prM is the only viral peptide matured by host furin in the trans-Golgi network probably to avoid catastrophic activation of the viral fusion activity in acidic Golgi compartment prior to virion release. prM-E cleavage is inefficient, and many virions are only partially matured. These uncleaved prM would play a role in immune evasion. In terms of biological role, may play a role in virus budding. Exerts cytotoxic effects by activating a mitochondrial apoptotic pathway through M ectodomain. May display a viroporin activity. Functionally, binds to host cell surface receptor and mediates fusion between viral and cellular membranes. Envelope protein is synthesized in the endoplasmic reticulum in the form of heterodimer with protein prM. They play a role in virion budding in the ER, and the newly formed immature particle is covered with 60 spikes composed of heterodimer between precursor prM and envelope protein E. The virion is transported to the Golgi apparatus where the low pH causes dissociation of PrM-E heterodimers and formation of E homodimers. prM-E cleavage is inefficient, and many virions are only partially matured. These uncleaved prM would play a role in immune evasion. Its function is as follows. Involved in immune evasion, pathogenesis and viral replication. Once cleaved off the polyprotein, is targeted to three destinations: the viral replication cycle, the plasma membrane and the extracellular compartment. Essential for viral replication. Required for formation of the replication complex and recruitment of other non-structural proteins to the ER-derived membrane structures. Excreted as a hexameric lipoparticle that plays a role against host immune response. Antagonizing the complement function. Binds to the host macrophages and dendritic cells. Inhibits signal transduction originating from Toll-like receptor 3 (TLR3). Involved in immune evasion, pathogenesis and viral replication. Once cleaved off the polyprotein, is targeted to three destinations: the viral replication cycle, the plasma membrane and the extracellular compartment. Essential for viral replication. Required for formation of the replication complex and recruitment of other non-structural proteins to the ER-derived membrane structures. Excreted as a hexameric lipoparticle that plays a role against host immune response. Antagonizing the complement function. Binds to the host macrophages and dendritic cells. Inhibits signal transduction originating from Toll-like receptor 3 (TLR3). Mediates complement activation, which may contribute to the pathogenesis of the vascular leakage that occurs in severe dengue disease. Activates autophagy through the AMPK/ERK/mTOR signaling pathway. Mechanistically, acts as the assembly platform for STK11-AMPK interactions and promotes STK11-AMPK interactions. In turn, promotes phosphorylation of the AMPK kinase structural domain and activates AMPK, thereby positively regulating the AMPK/ERK/mTOR signaling pathway and inducing autophagy. In terms of biological role, component of the viral RNA replication complex that functions in virion assembly and antagonizes the host immune response. Functionally, required cofactor for the serine protease function of NS3. May have membrane-destabilizing activity and form viroporins. Its function is as follows. Displays three enzymatic activities: serine protease, NTPase and RNA helicase. NS3 serine protease, in association with NS2B, performs its autocleavage and cleaves the polyprotein at dibasic sites in the cytoplasm: C-prM, NS2A-NS2B, NS2B-NS3, NS3-NS4A, NS4A-2K and NS4B-NS5. NS3 RNA helicase binds RNA and unwinds dsRNA in the 3' to 5' direction. Regulates the ATPase activity of the NS3 helicase activity. NS4A allows NS3 helicase to conserve energy during unwinding. Plays a role in the inhibition of the host innate immune response. Interacts with host MAVS and thereby prevents the interaction between RIGI and MAVS. In turn, IFN-beta production is impaired. Interacts with host AUP1 which mediates induction of lipophagy in host cells and facilitates production of virus progeny particles. In terms of biological role, functions as a signal peptide for NS4B and is required for the interferon antagonism activity of the latter. Functionally, induces the formation of ER-derived membrane vesicles where the viral replication takes place. Inhibits interferon (IFN)-induced host STAT1 phosphorylation and nuclear translocation, thereby preventing the establishment of cellular antiviral state by blocking the IFN-alpha/beta pathway. Its function is as follows. Replicates the viral (+) and (-) RNA genome, and performs the capping of genomes in the cytoplasm. NS5 methylates viral RNA cap at guanine N-7 and ribose 2'-O positions. Besides its role in RNA genome replication, also prevents the establishment of cellular antiviral state by blocking the interferon-alpha/beta (IFN-alpha/beta) signaling pathway. Inhibits host TYK2 and STAT2 phosphorylation, thereby preventing activation of JAK-STAT signaling pathway. May reduce immune responses by preventing the recruitment of the host PAF1 complex to interferon-responsive genes. The sequence is that of Genome polyprotein from Dengue virus type 2 (strain Jamaica/1409/1983) (DENV-2).